The chain runs to 399 residues: Dof zinc finger protein DOF5.1 (399 aa).

The Dof-type zinc-finger motif lies at 95–149 (LKCPRCDSTNTKFCYFNNYSLTQPRHFCKACRRYWTRGGALRSVPVGGGCRRNKR). 4 residues coordinate Zn(2+): Cys97, Cys100, Cys122, and Cys125. The segment at 139-176 (PVGGGCRRNKRTKNSSGGGGGSTSSGNSKSQDSATSND) is disordered.

In terms of tissue distribution, expressed ubiquitously, especially in the vascular tissues, except in seeds, petals and anthers. Specific to the vascular tissues in young leaves, cotyledons and flower buds. The PEAR proteins (e.g. DOF2.4, DOF5.1, DOF3.2, DOF1.1, DOF5.6 and DOF5.3) form a short-range concentration gradient that peaks at protophloem sieve elements (PSE).

It is found in the nucleus. Functionally, transcription factor that binds specifically to a 5'-AA[AG]G-3' consensus core sequence. Binds to 5'-TAAAGT-3' motif in REV promoter to triggers its transcription, thus regulating adaxial-abaxial polarity and influencing leaf axial patterning in an auxin transport- and response-dependent manner (e.g. IAA6 and IAA19 genes expression). Probably involved in early processes for vascular development. The PEAR proteins (e.g. DOF2.4, DOF5.1, DOF3.2, DOF1.1, DOF5.6 and DOF5.3) activate gene expression that promotes radial growth of protophloem sieve elements. The sequence is that of Dof zinc finger protein DOF5.1 from Arabidopsis thaliana (Mouse-ear cress).